The chain runs to 336 residues: 2-phospho-L-lactate transferase (336 aa).

Asp-49 lines the 7,8-didemethyl-8-hydroxy-5-deazariboflavin pocket.

The protein belongs to the CofD family. In terms of assembly, homodimer. Requires Mg(2+) as cofactor.

It carries out the reaction (2S)-lactyl-2-diphospho-5'-guanosine + 7,8-didemethyl-8-hydroxy-5-deazariboflavin = oxidized coenzyme F420-0 + GMP + H(+). The protein operates within cofactor biosynthesis; coenzyme F420 biosynthesis. In terms of biological role, catalyzes the transfer of the 2-phospholactate moiety from (2S)-lactyl-2-diphospho-5'-guanosine to 7,8-didemethyl-8-hydroxy-5-deazariboflavin (FO) with the formation of oxidized coenzyme F420-0 and GMP. The chain is 2-phospho-L-lactate transferase from Halobacterium salinarum (strain ATCC 700922 / JCM 11081 / NRC-1) (Halobacterium halobium).